The chain runs to 142 residues: Transcription antitermination protein NusB (142 aa).

This sequence belongs to the NusB family.

Involved in transcription antitermination. Required for transcription of ribosomal RNA (rRNA) genes. Binds specifically to the boxA antiterminator sequence of the ribosomal RNA (rrn) operons. In Streptomyces coelicolor (strain ATCC BAA-471 / A3(2) / M145), this protein is Transcription antitermination protein NusB.